The chain runs to 207 residues: Outer-membrane lipoprotein LolB (207 aa).

Positions M1 to A21 are cleaved as a signal peptide. C22 carries N-palmitoyl cysteine lipidation. A lipid anchor (S-diacylglycerol cysteine) is attached at C22.

The protein belongs to the LolB family. In terms of assembly, monomer.

It localises to the cell outer membrane. Its function is as follows. Plays a critical role in the incorporation of lipoproteins in the outer membrane after they are released by the LolA protein. The chain is Outer-membrane lipoprotein LolB from Escherichia coli O6:K15:H31 (strain 536 / UPEC).